Here is a 232-residue protein sequence, read N- to C-terminus: Dehydrin DHN2 (232 aa).

Positions 1 to 12 are enriched in polar residues; that stretch reads MSQYQNQYGAQT. 3 disordered regions span residues 1–92, 131–156, and 173–232; these read MSQY…STNT, PGTE…SGGG, and PGDK…CTGH. A compositionally biased stretch (gly residues) spans 73 to 82; that stretch reads THTGGVGGYG. The segment covering 131-140 has biased composition (basic and acidic residues); sequence PGTEQSRTHT. Residues 143–156 show a composition bias toward gly residues; it reads TGYGSTGYGASGGG. Basic and acidic residues predominate over residues 200–223; the sequence is YVREEHRVDHGEKKGIMDKIKEKL.

Belongs to the plant dehydrin family.

The polypeptide is Dehydrin DHN2 (DHN2) (Pisum sativum (Garden pea)).